The sequence spans 130 residues: Small ribosomal subunit protein uS11 (130 aa).

This sequence belongs to the universal ribosomal protein uS11 family. Part of the 30S ribosomal subunit. Interacts with proteins S7 and S18. Binds to IF-3.

Its function is as follows. Located on the platform of the 30S subunit, it bridges several disparate RNA helices of the 16S rRNA. Forms part of the Shine-Dalgarno cleft in the 70S ribosome. The protein is Small ribosomal subunit protein uS11 of Thermotoga maritima (strain ATCC 43589 / DSM 3109 / JCM 10099 / NBRC 100826 / MSB8).